The sequence spans 405 residues: MRSLPNVLAIVLAGGEGKRLFPLTEDRAKPAVPFGGSYRLIDFVLSNLVNAGFLKIAVLTQYKSHSLDRHISQAWNLSGPTPQYIASVPAQQRRGKRWYNGSADAILQSLNLIYDEKPDYVIVFGADHVYRMDPAQMVEEHIATGLDCSVAGIRVPRSEASAFGCIQADGMGTITEFVEKPENPPATPDDPNMTYASMGNYVFTTQALIDALLEDEKNEDSAHDMGGNIIPYFVEREQAHVYDFMANEVPGSTERDHGYWRDVGTIDSFYEAHMDMISVHPIFNLYNRSWPIHSTDDSNFPPAKFVQNGIAQSSMVAPGCIVSGGTVRNSVLASDVHVADGATVEGSVILPGVRIGRGAVVRHAILDKNVVVSDGAIIGVDRERDEERFKVSEGGVVVVGKNVKV.

Alpha-D-glucose 1-phosphate is bound by residues Tyr-99, Gly-164, 179–180 (EK), and Ser-197.

It belongs to the bacterial/plant glucose-1-phosphate adenylyltransferase family. Homotetramer.

The catalysed reaction is alpha-D-glucose 1-phosphate + ATP + H(+) = ADP-alpha-D-glucose + diphosphate. Its pathway is glycan biosynthesis; glycogen biosynthesis. Its function is as follows. Involved in the biosynthesis of ADP-glucose, a building block required for the elongation reactions to produce glycogen. Catalyzes the reaction between ATP and alpha-D-glucose 1-phosphate (G1P) to produce pyrophosphate and ADP-Glc. The chain is Glucose-1-phosphate adenylyltransferase from Corynebacterium aurimucosum (strain ATCC 700975 / DSM 44827 / CIP 107346 / CN-1) (Corynebacterium nigricans).